The following is a 283-amino-acid chain: ATP synthase gamma chain (283 aa).

The protein belongs to the ATPase gamma chain family. As to quaternary structure, F-type ATPases have 2 components, CF(1) - the catalytic core - and CF(0) - the membrane proton channel. CF(1) has five subunits: alpha(3), beta(3), gamma(1), delta(1), epsilon(1). CF(0) has three main subunits: a, b and c.

It is found in the cell inner membrane. Its function is as follows. Produces ATP from ADP in the presence of a proton gradient across the membrane. The gamma chain is believed to be important in regulating ATPase activity and the flow of protons through the CF(0) complex. This Ehrlichia ruminantium (strain Gardel) protein is ATP synthase gamma chain.